Consider the following 165-residue polypeptide: Protein SprT (165 aa).

The SprT-like domain occupies glutamate 20–valine 163. Histidine 78 provides a ligand contact to Zn(2+). Glutamate 79 is an active-site residue. Histidine 82 lines the Zn(2+) pocket.

Belongs to the SprT family. The cofactor is Zn(2+).

It is found in the cytoplasm. The polypeptide is Protein SprT (Salmonella arizonae (strain ATCC BAA-731 / CDC346-86 / RSK2980)).